A 916-amino-acid polypeptide reads, in one-letter code: Pertactin autotransporter (916 aa).

The first 37 residues, 1 to 37 (MNMSLSRIVKAAPLRRTTLAMALGALGALGAAPAAHA), serve as a signal peptide directing secretion. A Cell attachment site; involved in adhesion to various eukaryotic cell lines motif is present at residues 263–265 (RGD). Tandem repeats lie at residues 269–273 (GGAVP), 274–278 (GGAVP), and 279–283 (GGAVP). A 4 X 5 AA tandem repeats of G-G-A-V-P region spans residues 269 to 288 (GGAVPGGAVPGGAVPGGFGP). A 4; approximate repeat occupies 284-288 (GGFGP). The segment at 564–613 (SLVGAKAPPAPKPAPQPGPQPGPQPPQPPQPPQRQPEAPAPQPPAGRELS) is disordered. The segment covering 571-607 (PPAPKPAPQPGPQPGPQPPQPPQPPQRQPEAPAPQPP) has biased composition (pro residues). The 6 X 3 AA repeats of P-Q-P stretch occupies residues 578–606 (PQPGPQPGPQPPQPPQPPQRQPEAPAPQP). Positions 648–916 (LNPDAGGAWG…TFHAGYRYSW (269 aa)) constitute an Autotransporter domain. The Cell attachment site signature appears at 706 to 708 (RGD).

In terms of assembly, monomer.

The protein localises to the periplasm. It localises to the secreted. Its subcellular location is the cell surface. The protein resides in the cell outer membrane. Its function is as follows. Agglutinogen that binds to eukaryotic cells; a process mediated by the R-G-D sequence. Pertactin may have a role in bacterial adhesion, and thus play a role in virulence. May contribute to the disease state of whooping cough. This Bordetella bronchiseptica (strain ATCC BAA-588 / NCTC 13252 / RB50) (Alcaligenes bronchisepticus) protein is Pertactin autotransporter (prn).